The sequence spans 150 residues: Large ribosomal subunit protein bL9 (150 aa).

Belongs to the bacterial ribosomal protein bL9 family.

In terms of biological role, binds to the 23S rRNA. This chain is Large ribosomal subunit protein bL9, found in Alkalilimnicola ehrlichii (strain ATCC BAA-1101 / DSM 17681 / MLHE-1).